We begin with the raw amino-acid sequence, 466 residues long: UDP-glycosyltransferase 79 (466 aa).

H27 (proton acceptor) is an active-site residue. A UDP-alpha-D-glucose-binding site is contributed by H27. D120 serves as the catalytic Charge relay. UDP-alpha-D-glucose contacts are provided by S142, T291, F343, C344, H361, W364, N365, S366, E369, D385, and Q386. Residues T291, F343, C344, and H361 each contribute to the UDP site. The UDP site is built by N365, S366, and E369.

Belongs to the UDP-glycosyltransferase family.

Its function is as follows. Involved in the detoxification of the Fusarium mycotoxin deoxynivalenol by the transfer of glucose from UDP-D-glucose to the hydroxyl group at C-3, forming deoxynivalenol-3-O-beta-D-glucoside. The protein is UDP-glycosyltransferase 79 of Oryza sativa subsp. japonica (Rice).